Here is a 479-residue protein sequence, read N- to C-terminus: MRHLWLLLLSVSLVQTQAATTDSDKVDLSIARGHRPVDRRKEEPPSLRPAPPPISGGGYRARPAKVDAGQKKVERKPPDAGGCVHGDGDMGVLCPTGCELRQTLLNHERPIKNSIAELNSNINSVSETSSVTFQYLTLLKDMWKKKQAQVKDNENVINEYSSILEDQKLYIDETVNDNIPLNLRVLRSILEDLRSKIQKLESDISAQTEYCHTPCTVNCNIPVVSGKECEEIIRKGGETSEMYLIQPDTSSKPYRVYCDMKTENGGWTVIQNRQDGSVDFGRKWDPYKKGFGNIATNEDTKKYCGLPGEYWLGNDKISQLTRIGPTELLIEMEDWKGDKVKAHYGGFTVQTEANKYQVSVNKYKGTAGNALMEGASQLVGENRTMTIHNGMFFSTYDRDNDGWVTTDPRKQCSKEDGGGWWYNRCHAANPNGRYYWGGLYSWDMSKHGTDDGVVWMNWKGSWYSMRRMSMKIRPVFPQQ.

Residues 1–18 (MRHLWLLLLSVSLVQTQA) form the signal peptide. A disordered region spans residues 20 to 82 (TTDSDKVDLS…VERKPPDAGG (63 aa)). The interval 33–35 (GHR) is beta-chain polymerization, binding distal domain of another fibrin. Composition is skewed to basic and acidic residues over residues 35-45 (RPVDRRKEEPP) and 64-78 (AKVDAGQKKVERKPP). 2 disulfide bridges follow: Cys-219–Cys-304 and Cys-229–Cys-258. The Fibrinogen C-terminal domain maps to 220–476 (NIPVVSGKEC…RMSMKIRPVF (257 aa)). The N-linked (GlcNAc...) asparagine glycan is linked to Asn-382. A disulfide bridge links Cys-412 with Cys-425.

As to quaternary structure, heterohexamer; disulfide linked. Contains 2 sets of 3 non-identical chains (alpha, beta and gamma). The 2 heterotrimers are in head to head conformation with the N-termini in a small central domain. In terms of processing, conversion of fibrinogen to fibrin is triggered by thrombin, which cleaves fibrinopeptides A and B from alpha and beta chains, and thus exposes the N-terminal polymerization sites responsible for the formation of the soft clot.

It localises to the secreted. In terms of biological role, cleaved by the protease thrombin to yield monomers which, together with fibrinogen alpha (FGA) and fibrinogen gamma (FGG), polymerize to form an insoluble fibrin matrix. Fibrin has a major function in hemostasis as one of the primary components of blood clots. In addition, functions during the early stages of wound repair to stabilize the lesion and guide cell migration during re-epithelialization. Was originally thought to be essential for platelet aggregation, based on in vitro studies using anticoagulated blood. However subsequent studies have shown that it is not absolutely required for thrombus formation in vivo. Enhances expression of SELP in activated platelets. Maternal fibrinogen is essential for successful pregnancy. Fibrin deposition is also associated with infection, where it protects against IFNG-mediated hemorrhage. May also facilitate the antibacterial immune response via both innate and T-cell mediated pathways. The polypeptide is Fibrinogen beta chain (Fgb) (Rattus norvegicus (Rat)).